Here is a 561-residue protein sequence, read N- to C-terminus: DNA ligase B (561 aa).

The N6-AMP-lysine intermediate role is filled by K125.

The protein belongs to the NAD-dependent DNA ligase family. LigB subfamily.

It catalyses the reaction NAD(+) + (deoxyribonucleotide)n-3'-hydroxyl + 5'-phospho-(deoxyribonucleotide)m = (deoxyribonucleotide)n+m + AMP + beta-nicotinamide D-nucleotide.. Catalyzes the formation of phosphodiester linkages between 5'-phosphoryl and 3'-hydroxyl groups in double-stranded DNA using NAD as a coenzyme and as the energy source for the reaction. The polypeptide is DNA ligase B (Salmonella arizonae (strain ATCC BAA-731 / CDC346-86 / RSK2980)).